We begin with the raw amino-acid sequence, 388 residues long: Protochlorophyllide reductase A, chloroplastic (388 aa).

Residues 1-74 constitute a chloroplast transit peptide; sequence MALQLLPSTL…KPSGKKTLRQ (74 aa).

It belongs to the short-chain dehydrogenases/reductases (SDR) family. POR subfamily.

Its subcellular location is the plastid. The protein localises to the chloroplast. The enzyme catalyses chlorophyllide a + NADP(+) = protochlorophyllide a + NADPH + H(+). Its pathway is porphyrin-containing compound metabolism; chlorophyll biosynthesis. Functionally, phototransformation of protochlorophyllide (Pchlide) to chlorophyllide (Chlide). This Triticum aestivum (Wheat) protein is Protochlorophyllide reductase A, chloroplastic (PORA).